Here is a 96-residue protein sequence, read N- to C-terminus: Early E1A 11 kDa protein (96 aa).

2 disordered regions span residues 1–29 (MNSRMRRWAATSRLLHEDPPATPPSQDQQ) and 72–96 (LAQGEEEEEEEDGAEDIEENGEESD). Acidic residues predominate over residues 75 to 96 (GEEEEEEEDGAEDIEENGEESD).

In Murine adenovirus A serotype 1 (MAdV-1), this protein is Early E1A 11 kDa protein.